Here is a 354-residue protein sequence, read N- to C-terminus: MTTVIQRRSTSNVWEQFCEWVTSTDNRLYIGWFGVLMIPTLLTATTCFIIAFIGAPPVDIDGIREPVSGSLLYGNNIITGAVVPSSAAIGLHFYPIWEAASLDEWLYNGGPYQLIVLHFLIGVFCYMGREWELSYRLGMRPWIAVAYSAPVAAATAVFLIYPIGQGSFSDGMPLGISGTFNFMLVFQAEHNILMHPFHQLGVAGVFGGALFSAMHGSLVTSSLIRETSEEESQNLGYKFGQEEETYNIVAAHGYFGRLIFQYASFNNSRSLHFFLAAWPVIGIWFTALGISIMAFNLNGFNFNQSIVDSNGRVVGTWADVLNRANLGMEVMHERNAHNFPLDLAAVEVAPAIRG.

Transmembrane regions (helical) follow at residues 29–46, 118–133, and 142–156; these read YIGW…TATT, HFLI…EWEL, and WIAV…AATA. His-118 serves as a coordination point for chlorophyll a. Tyr-126 provides a ligand contact to pheophytin a. The [CaMn4O5] cluster site is built by Asp-170 and Glu-189. A helical transmembrane segment spans residues 197–218; it reads FHQLGVAGVFGGALFSAMHGSL. His-198 provides a ligand contact to chlorophyll a. A quinone-binding positions include His-215 and 264–265; that span reads SF. His-215 serves as a coordination point for Fe cation. His-272 is a Fe cation binding site. A helical transmembrane segment spans residues 274-288; it reads FLAAWPVIGIWFTAL. Residues His-332, Glu-333, Asp-342, and Ala-344 each coordinate [CaMn4O5] cluster. Residues 345–354 constitute a propeptide that is removed on maturation; that stretch reads AVEVAPAIRG.

The protein belongs to the reaction center PufL/M/PsbA/D family. PSII is composed of 1 copy each of membrane proteins PsbA, PsbB, PsbC, PsbD, PsbE, PsbF, PsbH, PsbI, PsbJ, PsbK, PsbL, PsbM, PsbT, PsbX, PsbY, PsbZ, Psb30/Ycf12, peripheral proteins PsbO, CyanoQ (PsbQ), PsbU, PsbV and a large number of cofactors. It forms dimeric complexes. Requires The D1/D2 heterodimer binds P680, chlorophylls that are the primary electron donor of PSII, and subsequent electron acceptors. It shares a non-heme iron and each subunit binds pheophytin, quinone, additional chlorophylls, carotenoids and lipids. D1 provides most of the ligands for the Mn4-Ca-O5 cluster of the oxygen-evolving complex (OEC). There is also a Cl(-1) ion associated with D1 and D2, which is required for oxygen evolution. The PSII complex binds additional chlorophylls, carotenoids and specific lipids. as cofactor. In terms of processing, tyr-161 forms a radical intermediate that is referred to as redox-active TyrZ, YZ or Y-Z. C-terminally processed by CtpA; processing is essential to allow assembly of the oxygen-evolving complex and thus photosynthetic growth.

The protein resides in the cellular thylakoid membrane. It carries out the reaction 2 a plastoquinone + 4 hnu + 2 H2O = 2 a plastoquinol + O2. In terms of biological role, photosystem II (PSII) is a light-driven water:plastoquinone oxidoreductase that uses light energy to abstract electrons from H(2)O, generating O(2) and a proton gradient subsequently used for ATP formation. It consists of a core antenna complex that captures photons, and an electron transfer chain that converts photonic excitation into a charge separation. The D1/D2 (PsbA/PsbD) reaction center heterodimer binds P680, the primary electron donor of PSII as well as several subsequent electron acceptors. The protein is Photosystem II protein D1 1 of Synechococcus sp. (strain JA-3-3Ab) (Cyanobacteria bacterium Yellowstone A-Prime).